We begin with the raw amino-acid sequence, 260 residues long: Hydroxyethylthiazole kinase (260 aa).

Met36 provides a ligand contact to substrate. Residues Arg112 and Thr157 each coordinate ATP. Residue Gly184 participates in substrate binding.

It belongs to the Thz kinase family. The cofactor is Mg(2+).

The enzyme catalyses 5-(2-hydroxyethyl)-4-methylthiazole + ATP = 4-methyl-5-(2-phosphooxyethyl)-thiazole + ADP + H(+). It participates in cofactor biosynthesis; thiamine diphosphate biosynthesis; 4-methyl-5-(2-phosphoethyl)-thiazole from 5-(2-hydroxyethyl)-4-methylthiazole: step 1/1. Catalyzes the phosphorylation of the hydroxyl group of 4-methyl-5-beta-hydroxyethylthiazole (THZ). This Shouchella clausii (strain KSM-K16) (Alkalihalobacillus clausii) protein is Hydroxyethylthiazole kinase.